A 721-amino-acid chain; its full sequence is Polyphosphate kinase (721 aa).

Asn-54 serves as a coordination point for ATP. Arg-379 and Arg-409 together coordinate Mg(2+). The PLD phosphodiesterase domain maps to 434-468 (THLKTHSKIALVVKRIGGELTSFVHLGTGNYNDKT). Catalysis depends on His-439, which acts as the Phosphohistidine intermediate. ATP contacts are provided by Tyr-472, Arg-568, and His-596.

This sequence belongs to the polyphosphate kinase 1 (PPK1) family. Mg(2+) serves as cofactor. An intermediate of this reaction is the autophosphorylated ppk in which a phosphate is covalently linked to a histidine residue through a N-P bond.

It carries out the reaction [phosphate](n) + ATP = [phosphate](n+1) + ADP. Its function is as follows. Catalyzes the reversible transfer of the terminal phosphate of ATP to form a long-chain polyphosphate (polyP). In Staphylococcus haemolyticus (strain JCSC1435), this protein is Polyphosphate kinase.